We begin with the raw amino-acid sequence, 310 residues long: MSGERAKRFPLALEDLKRAPRKSEGRPGERQAAGAVPKAADKPAAVLKPVAVKPAAVRAPLPGIAAAKPATAPKPTAPKPALPKPAAPSIAPAGAFALTSERVRERMVERLRANGVTDARVLDAMAAVPRHLFVDPGLATQAYEDSALPIGHQQTISKPSVVARMIELAMAGRTLERVLEIGTGCGYQAAVLSHVARDVYSIERIKPLYERAKLNLRPLRVPNIRLHYGDGRVGLPSAAPFDAIVIAAAGLDVPQALLEQLAIGGRLVAPVGAQSGQHQVLTLVERVAHAQWRESRLDRVFFVPLKSGVI.

2 disordered regions span residues 1–44 (MSGE…DKPA) and 67–88 (AKPA…PAAP). Over residues 14 to 29 (EDLKRAPRKSEGRPGE) the composition is skewed to basic and acidic residues. Residues 32 to 44 (AAGAVPKAADKPA) are compositionally biased toward low complexity. Residues 75–86 (PTAPKPALPKPA) are compositionally biased toward pro residues. Residue serine 157 is part of the active site.

The protein belongs to the methyltransferase superfamily. L-isoaspartyl/D-aspartyl protein methyltransferase family.

It is found in the cytoplasm. The enzyme catalyses [protein]-L-isoaspartate + S-adenosyl-L-methionine = [protein]-L-isoaspartate alpha-methyl ester + S-adenosyl-L-homocysteine. Functionally, catalyzes the methyl esterification of L-isoaspartyl residues in peptides and proteins that result from spontaneous decomposition of normal L-aspartyl and L-asparaginyl residues. It plays a role in the repair and/or degradation of damaged proteins. The protein is Protein-L-isoaspartate O-methyltransferase of Burkholderia orbicola (strain MC0-3).